The following is a 263-amino-acid chain: Acyl-[acyl-carrier-protein]--UDP-N-acetylglucosamine O-acyltransferase (263 aa).

This sequence belongs to the transferase hexapeptide repeat family. LpxA subfamily. Homotrimer.

It localises to the cytoplasm. It carries out the reaction a (3R)-hydroxyacyl-[ACP] + UDP-N-acetyl-alpha-D-glucosamine = a UDP-3-O-[(3R)-3-hydroxyacyl]-N-acetyl-alpha-D-glucosamine + holo-[ACP]. Its pathway is glycolipid biosynthesis; lipid IV(A) biosynthesis; lipid IV(A) from (3R)-3-hydroxytetradecanoyl-[acyl-carrier-protein] and UDP-N-acetyl-alpha-D-glucosamine: step 1/6. Its function is as follows. Involved in the biosynthesis of lipid A, a phosphorylated glycolipid that anchors the lipopolysaccharide to the outer membrane of the cell. The polypeptide is Acyl-[acyl-carrier-protein]--UDP-N-acetylglucosamine O-acyltransferase (Stenotrophomonas maltophilia (strain R551-3)).